Here is a 532-residue protein sequence, read N- to C-terminus: 2,3-bisphosphoglycerate-independent phosphoglycerate mutase (532 aa).

Positions 15 and 65 each coordinate Mn(2+). Ser65 functions as the Phosphoserine intermediate in the catalytic mechanism. Residues His126, 156–157, Arg188, Arg194, 258–261, and Lys331 each bind substrate; these read RD and RPDR. Residues Asp398, His402, Asp439, His440, and His457 each coordinate Mn(2+).

It belongs to the BPG-independent phosphoglycerate mutase family. As to quaternary structure, monomer. Mn(2+) is required as a cofactor.

The enzyme catalyses (2R)-2-phosphoglycerate = (2R)-3-phosphoglycerate. It participates in carbohydrate degradation; glycolysis; pyruvate from D-glyceraldehyde 3-phosphate: step 3/5. In terms of biological role, catalyzes the interconversion of 2-phosphoglycerate and 3-phosphoglycerate. This is 2,3-bisphosphoglycerate-independent phosphoglycerate mutase from Microcystis aeruginosa (strain NIES-843 / IAM M-2473).